A 444-amino-acid chain; its full sequence is Acyl-CoA 6-desaturase (444 aa).

Residues 1–122 (MGKGGNQDEG…FRALRKTAED (122 aa)) are Cytoplasmic-facing. The Cytochrome b5 heme-binding domain occupies 18–95 (MPTFRWEEIQ…MKPLLIGELA (78 aa)). Residues 123–143 (MNLFKSNQLFFLLHLAHIIAM) traverse the membrane as a helical segment. Over 144–147 (ESIA) the chain is Lumenal. Residues 148–168 (WFTLFYFGNGWIPTIITAFVL) traverse the membrane as a helical segment. Residues 169-264 (ATSQAQAGWL…KYLPYNHQHE (96 aa)) are Cytoplasmic-facing. Residues 180–184 (HDYGH) carry the Histidine box-1 motif. The short motif at 217 to 221 (HFQHH) is the Histidine box-2 element. The helical transmembrane segment at 265-285 (YFFLIGPPLLIPLYFQYQIIM) threads the bilayer. Residues 286-305 (TMIVRKYWADLAWAISYYTR) lie on the Lumenal side of the membrane. A helical membrane pass occupies residues 306 to 326 (FFITYIPFYGVLGSILFLNFI). Topologically, residues 327-444 (RFLESHWFVW…QLWLDAYLHK (118 aa)) are cytoplasmic. The Histidine box-3 motif lies at 382–386 (QIEHH).

The protein belongs to the fatty acid desaturase type 1 family.

The protein localises to the endoplasmic reticulum membrane. It catalyses the reaction (9Z,12Z)-octadecadienoyl-CoA + 2 Fe(II)-[cytochrome b5] + O2 + 2 H(+) = (6Z,9Z,12Z)-octadecatrienoyl-CoA + 2 Fe(III)-[cytochrome b5] + 2 H2O. The enzyme catalyses (9Z,12Z,15Z)-octadecatrienoyl-CoA + 2 Fe(II)-[cytochrome b5] + O2 + 2 H(+) = (6Z,9Z,12Z,15Z)-octadecatetraenoyl-CoA + 2 Fe(III)-[cytochrome b5] + 2 H2O. It carries out the reaction (9Z,12Z,15Z,18Z,21Z)-tetracosapentaenoyl-CoA + 2 Fe(II)-[cytochrome b5] + O2 + 2 H(+) = (6Z,9Z,12Z,15Z,18Z,21Z)-tetracosahexaenoyl-CoA + 2 Fe(III)-[cytochrome b5] + 2 H2O. The catalysed reaction is (11E)-octadecenoyl-CoA + 2 Fe(II)-[cytochrome b5] + O2 + 2 H(+) = (6Z,11E)-octadecadienoyl-CoA + 2 Fe(III)-[cytochrome b5] + 2 H2O. It catalyses the reaction (11Z,14Z)-eicosadienoyl-CoA + 2 Fe(II)-[cytochrome b5] + O2 + 2 H(+) = (8Z,11Z,14Z)-eicosatrienoyl-CoA + 2 Fe(III)-[cytochrome b5] + 2 H2O. The enzyme catalyses (11Z,14Z,17Z)-eicosatrienoyl-CoA + 2 Fe(II)-[cytochrome b5] + O2 + 2 H(+) = (8Z,11Z,14Z,17Z)-eicosatetraenoyl-CoA + 2 Fe(III)-[cytochrome b5] + 2 H2O. Its pathway is lipid metabolism; polyunsaturated fatty acid biosynthesis. Its function is as follows. Involved in the biosynthesis of highly unsaturated fatty acids (HUFA) from the essential polyunsaturated fatty acids (PUFA) linoleic acid (LA) (18:2n-6) and alpha-linolenic acid (ALA) (18:3n-3) precursors, acting as a fatty acyl-coenzyme A (CoA) desaturase that introduces a cis double bond at carbon 6 of the fatty acyl chain. Catalyzes the first and rate limiting step in this pathway which is the desaturation of LA (18:2n-6) and ALA (18:3n-3) into gamma-linoleate (GLA) (18:3n-6) and stearidonate (18:4n-3), respectively. Subsequently, in the biosynthetic pathway of HUFA n-3 series, it desaturates tetracosapentaenoate (24:5n-3) to tetracosahexaenoate (24:6n-3), which is then converted to docosahexaenoate (DHA)(22:6n-3), an important lipid for nervous system function. It can also desaturate (11E)-octadecenoate (trans-vaccenoate, a metabolite in the biohydrogenation pathway of LA and the predominant trans fatty acid in cow milk) at carbon 6 generating (6Z,11E)-octadecadienoate. In addition to Delta-6 activity, this enzyme exhibits Delta-8 activity with slight biases toward n-3 fatty acyl-CoA substrates. This Bos taurus (Bovine) protein is Acyl-CoA 6-desaturase (FADS2).